The chain runs to 239 residues: Transcriptional regulatory protein RstA (239 aa).

The Response regulatory domain maps to T3–L116. At D52 the chain carries 4-aspartylphosphate. The segment at residues Y136–P235 is a DNA-binding region (ompR/PhoB-type).

Post-translationally, phosphorylated by RstB.

It is found in the cytoplasm. Member of the two-component regulatory system RstB/RstA. The protein is Transcriptional regulatory protein RstA (rstA) of Escherichia coli (strain K12).